The following is a 345-amino-acid chain: Hemagglutinin (345 aa).

7 N-linked (GlcNAc...) asparagine; by host glycosylation sites follow: asparagine 25, asparagine 59, asparagine 145, asparagine 164, asparagine 231, asparagine 302, and asparagine 331.

This sequence belongs to the influenza viruses hemagglutinin family. As to quaternary structure, homotrimer of disulfide-linked HA1-HA2. Post-translationally, in natural infection, inactive HA is matured into HA1 and HA2 outside the cell by one or more trypsin-like, arginine-specific endoprotease secreted by the bronchial epithelial cells. One identified protease that may be involved in this process is secreted in lungs by club cells. In terms of processing, palmitoylated.

It localises to the virion membrane. The protein localises to the host apical cell membrane. Binds to sialic acid-containing receptors on the cell surface, bringing about the attachment of the virus particle to the cell. Plays a major role in the determination of host range restriction and virulence. Class I viral fusion protein. Responsible for penetration of the virus into the cell cytoplasm by mediating the fusion of the membrane of the endocytosed virus particle with the endosomal membrane. Low pH in endosomes induce an irreversible conformational change in HA2, releasing the fusion hydrophobic peptide. Several trimers are required to form a competent fusion pore. The chain is Hemagglutinin (HA) from Homo sapiens (Human).